Here is a 158-residue protein sequence, read N- to C-terminus: MKNHLFFWGVLAIFVQAVLVTAGDEGERIVLADNKCKCVRVTSRIIPSPENPNEDILERHIRIIIPVNSRENISDPTSPVRTKFVYHLSDLCKKCDPVEVELDNQVVTASQSNICDEDSETCYAYDRNKCYTNRVPLTYGGQTKIVETALTPDSCYPD.

An N-terminal signal peptide occupies residues 1–22 (MKNHLFFWGVLAIFVQAVLVTA). 3 disulfide bridges follow: Cys-36–Cys-122, Cys-95–Cys-115, and Cys-130–Cys-155. Asn-72 carries N-linked (GlcNAc...) (complex) asparagine glycosylation.

Part of the secretory IgA (sIgA) complex that consists of two, four or five IgA monomers, and two additional non-Ig polypeptides, namely the JCHAIN and the secretory component (the proteolytic product of PIGR). Part of the secretory IgM (sIgM) complex that consist of five IgM monomers, and two additional non-Ig polypeptides, namely the JCHAIN and the secretory component (the proteolytic product of PIGR). JCHAIN-containing IgM interacts (via CH4 domain) with FCRM (via Ig-like domain). N-glycosylated. N-glycans attached to Asn-72 varies from truncated, differentially fucosylated to sialylated (NeuGc) complex types: Man3GlcNAc2; GlcNAc2Man3GlcNAc2(Fuc); Gal1GlcNAc1Man3GlcNAc2; GlcNAc2Man3GlcNAc2; GlcNAc1Man3GlcNAc2; GlcNAc1Man2GlcNAc2 and NeuGc1Gal1GlcNAc2Man3GlcNAc2.

The protein resides in the secreted. Its function is as follows. Serves to link two monomer units of either IgM or IgA. In the case of IgM, the J chain-joined dimer is a nucleating unit for the IgM pentamer, and in the case of IgA it induces dimers and/or larger polymers. It also helps to bind these immunoglobulins to secretory component. This is Immunoglobulin J chain (JCHAIN) from Equus asinus (Donkey).